The chain runs to 309 residues: Tagatose-6-phosphate kinase (309 aa).

It belongs to the carbohydrate kinase PfkB family. LacC subfamily.

It carries out the reaction D-tagatofuranose 6-phosphate + ATP = D-tagatofuranose 1,6-bisphosphate + ADP + H(+). Its pathway is carbohydrate metabolism; D-tagatose 6-phosphate degradation; D-glyceraldehyde 3-phosphate and glycerone phosphate from D-tagatose 6-phosphate: step 1/2. In Streptococcus pyogenes serotype M5 (strain Manfredo), this protein is Tagatose-6-phosphate kinase.